We begin with the raw amino-acid sequence, 661 residues long: Cyclic di-GMP phosphodiesterase PdeR (661 aa).

In terms of domain architecture, PAS spans 109–179 (GLSFAEQVVS…RRNNRVFFRS (71 aa)). The GGDEF domain maps to 265 to 397 (NKVGVVYLDL…GRGQFCVFTP (133 aa)). The region spanning 406–658 (YLWLDTNLRK…AFERWYKRYL (253 aa)) is the EAL domain.

Interacts with DgcM and MlrA.

It carries out the reaction 3',3'-c-di-GMP + H2O = 5'-phosphoguanylyl(3'-&gt;5')guanosine + H(+). Part of a signaling cascade that regulates curli biosynthesis. The cascade is composed of two cyclic-di-GMP (c-di-GMP) control modules, in which c-di-GMP controlled by the DgcE/PdeH pair (module I) regulates the activity of the DgcM/PdeR pair (module II), which in turn regulates activity of the transcription factor MlrA and expression of the master biofilm regulator csgD. PdeR acts as a trigger enzyme that connects modules I and II. It inhibits DgcM and MlrA by direct interaction. Inhibition is relieved when PdeR binds and degrades c-di-GMP generated by module I. This chain is Cyclic di-GMP phosphodiesterase PdeR, found in Escherichia coli (strain K12).